The chain runs to 349 residues: Small ribosomal subunit protein eS6 (349 aa).

Positions 224-349 are disordered; sequence RRRSRLSSMR…AKKEKKQKKK (126 aa). 2 stretches are compositionally biased toward basic and acidic residues: residues 231-251 and 260-334; these read SMRD…EKAA and KKEA…EAAK.

The protein belongs to the eukaryotic ribosomal protein eS6 family. As to quaternary structure, component of the small ribosomal subunit. Part of the small subunit (SSU) processome, composed of more than 70 proteins and the RNA chaperone small nucleolar RNA (snoRNA) U3. Ribosomal protein S6 is the major substrate of protein kinases in eukaryote ribosomes.

Its subcellular location is the cytoplasm. The protein resides in the nucleus. It is found in the nucleolus. Its function is as follows. Component of the 40S small ribosomal subunit. Plays an important role in controlling cell growth and proliferation through the selective translation of particular classes of mRNA. Part of the small subunit (SSU) processome, first precursor of the small eukaryotic ribosomal subunit. During the assembly of the SSU processome in the nucleolus, many ribosome biogenesis factors, an RNA chaperone and ribosomal proteins associate with the nascent pre-rRNA and work in concert to generate RNA folding, modifications, rearrangements and cleavage as well as targeted degradation of pre-ribosomal RNA by the RNA exosome. The chain is Small ribosomal subunit protein eS6 (RpS6) from Aedes albopictus (Asian tiger mosquito).